The primary structure comprises 211 residues: dITP/XTP pyrophosphatase (211 aa).

7–12 (TSNKKK) is a substrate binding site. Mg(2+)-binding residues include glutamate 43 and aspartate 72. The active-site Proton acceptor is aspartate 72. Substrate contacts are provided by residues serine 73, 169 to 172 (FGYD), lysine 190, and 195 to 196 (HR).

The protein belongs to the HAM1 NTPase family. As to quaternary structure, homodimer. Requires Mg(2+) as cofactor.

It carries out the reaction XTP + H2O = XMP + diphosphate + H(+). The enzyme catalyses dITP + H2O = dIMP + diphosphate + H(+). The catalysed reaction is ITP + H2O = IMP + diphosphate + H(+). Its function is as follows. Pyrophosphatase that catalyzes the hydrolysis of nucleoside triphosphates to their monophosphate derivatives, with a high preference for the non-canonical purine nucleotides XTP (xanthosine triphosphate), dITP (deoxyinosine triphosphate) and ITP. Seems to function as a house-cleaning enzyme that removes non-canonical purine nucleotides from the nucleotide pool, thus preventing their incorporation into DNA/RNA and avoiding chromosomal lesions. This is dITP/XTP pyrophosphatase from Hydrogenobaculum sp. (strain Y04AAS1).